Here is a 578-residue protein sequence, read N- to C-terminus: Translation initiation factor eIF2B subunit gamma (578 aa).

Phosphoserine is present on residues S296 and S300. 2 disordered regions span residues 298–337 and 535–578; these read QASF…SATS and DDSV…LFER. T306 carries the post-translational modification Phosphothreonine. The segment covering 544–578 has biased composition (acidic residues); it reads EIAEETDSDDRSDEDSDDSEYTDEYEYEDDGLFER.

It belongs to the eIF-2B gamma/epsilon subunits family. In terms of assembly, component of the translation initiation factor 2B (eIF2B) complex which is a heterodecamer of two sets of five different subunits: alpha, beta, gamma, delta and epsilon. Subunits alpha, beta and delta comprise a regulatory subcomplex and subunits epsilon and gamma comprise a catalytic subcomplex. Within the complex, the hexameric regulatory complex resides at the center, with the two heterodimeric catalytic subcomplexes bound on opposite sides.

It is found in the cytoplasm. The protein resides in the cytosol. Functionally, acts as a component of the translation initiation factor 2B (eIF2B) complex, which catalyzes the exchange of GDP for GTP on the eukaryotic initiation factor 2 (eIF2) complex gamma subunit. Its guanine nucleotide exchange factor activity is repressed when bound to eIF2 complex phosphorylated on the alpha subunit, thereby limiting the amount of methionyl-initiator methionine tRNA available to the ribosome and consequently global translation is repressed. It activates the synthesis of GCN4 in yeast under amino acid starvation conditions by suppressing the inhibitory effects of multiple AUG codons present in the leader of GCN4 mRNA. It may promote either repression or activation of GCN4 expression depending on amino acid availability. GCD1 stabilizes the interaction between eIF2 and GCD6 and stimulates the catalytic activity in vitro. The polypeptide is Translation initiation factor eIF2B subunit gamma (GCD1) (Saccharomyces cerevisiae (strain ATCC 204508 / S288c) (Baker's yeast)).